The primary structure comprises 520 residues: Cytochrome P450 monooxygenase 98 (520 aa).

A helical membrane pass occupies residues 7–27 (MLNNNLLIVIGTFAVCVYIVL). Cys-445 serves as a coordination point for heme.

Belongs to the cytochrome P450 family. It depends on heme as a cofactor.

It is found in the membrane. The protein operates within secondary metabolite biosynthesis. Its function is as follows. Cytochrome P450 monooxygenase that is able to use pyrene, phenanthrene, 3,5-dimethoxy-trans-stilbene and 3,5,4'-trimethoxy-trans-stilbene as substrates for oxidation. This Postia placenta (strain ATCC 44394 / Madison 698-R) (Brown rot fungus) protein is Cytochrome P450 monooxygenase 98.